The following is a 157-amino-acid chain: 3-dehydroquinate dehydratase (157 aa).

The active-site Proton acceptor is the Tyr-22. Residues Asn-73, His-79, and Asp-86 each coordinate substrate. The active-site Proton donor is the His-99. Residues 100 to 101 (LS) and Arg-110 each bind substrate.

It belongs to the type-II 3-dehydroquinase family. Homododecamer.

It carries out the reaction 3-dehydroquinate = 3-dehydroshikimate + H2O. It participates in metabolic intermediate biosynthesis; chorismate biosynthesis; chorismate from D-erythrose 4-phosphate and phosphoenolpyruvate: step 3/7. Functionally, catalyzes a trans-dehydration via an enolate intermediate. The chain is 3-dehydroquinate dehydratase from Roseiflexus castenholzii (strain DSM 13941 / HLO8).